The sequence spans 164 residues: uncharacterized protein (164 aa).

The first 18 residues, 1–18 (MILILTIIVGFLIYFVTA), serve as a signal peptide directing secretion. Residue asparagine 88 is glycosylated (N-linked (GlcNAc...) asparagine; by host).

The protein belongs to the IIV-6 357R family.

This is an uncharacterized protein from Acheta domesticus (House cricket).